The chain runs to 117 residues: V-type proton ATPase subunit G (117 aa).

The protein belongs to the V-ATPase G subunit family. V-ATPase is a heteromultimeric enzyme made up of two complexes: the ATP-hydrolytic V1 complex and the proton translocation V0 complex. The V1 complex consists of three catalytic AB heterodimers that form a heterohexamer, three peripheral stalks each consisting of EG heterodimers, one central rotor including subunits D and F, and the regulatory subunits C and H. The proton translocation complex V0 consists of the proton transport subunit a, a ring of proteolipid subunits c9c'', rotary subunit d, subunits e and f, and the accessory subunits VhaAC45 and ATP6AP2.

Subunit of the V1 complex of vacuolar(H+)-ATPase (V-ATPase), a multisubunit enzyme composed of a peripheral complex (V1) that hydrolyzes ATP and a membrane integral complex (V0) that translocates protons. V-ATPase is responsible for acidifying and maintaining the pH of intracellular compartments and in some cell types, is targeted to the plasma membrane, where it is responsible for acidifying the extracellular environment. In enterocytes, acts as part of a pHCl-2 sensory pathway which mediates Tor-dependent larval growth and metabolism in response to zinc availability. Likely acts in maintaining enterocyte lysosomal acidification which consequently promotes Tor activation at the lysosome membrane. This chain is V-type proton ATPase subunit G (Vha13), found in Drosophila melanogaster (Fruit fly).